The primary structure comprises 1090 residues: MATLLSHPQQRPPFLRQAIKIRRRRVRDLQDPPPQMAPEIQPPSHHFSPEQRALLYEDALYTVLHRLGHPEPNHVTEASELLRYLQEAFHVEPEEHQQTLQRVRELEKPIFCLKATVKQAKGILGKDVSGFSDPYCLLGIEQGVGVPGGSPGSRHRQKAVVRHTIPEEETHRTQVITQTLNPVWDETFILEFEDITNASFHLDMWDLDTVESVRQKLGELTDLHGLRRIFKEARKDKGQDDFLGNVVLRLQDLRCREDQWYPLEPRTETYPDRGQCHLQFQLIHKRRATSASRSQPSYTVHLHLLQQLVSHEVTQHEAGSTSWDGSLSPQAATVLFLHATQKDLSDFHQSMAQWLAYSRLYQSLEFPSSCLLHPITSIEYQWIQGRLKAEQQEELAASFSSLLTYGLSLIRRFRSVFPLSVSDSPARLQSLLRVLVQMCKMKAFGELCPNTAPLPQLVTEALQTGTTEWFHLKQQHHQPMVQGIPEAGKALLGLVQDVIGDLHQCQRTWDKIFHNTLKIHLFSMAFRELQWLVAKRVQDHTTVVGDVVSPEMGESLFQLYISLKELCQLRMSSSERDGVLALDNFHRWFQPAIPSWLQKTYNEALARVQRAVQMDELVPLGELTKHSTSAVDLSTCFAQISHTARQLDWPDPEEAFMITVKFVEDTCRLALVYCSLIKARARELSSGQKDQGQAANMLCVVVNDMEQLRLVIGKLPAQLAWEALEQRVGAVLEQGQLQNTLHAQLQSALAGLGHEIRTGVRTLAEQLEVGIAKHIQKLVGVRESVLPEDAILPLMKFLEVELCYMNTNLVQENFSSLLTLLWTHTLTVLVEAAASQRSSSLASNRLKIALQNLEICFHAEGCGLPPKALHTATFQALQRDLELQAASSRELIRKYFCSRIQQQAETTSEELGAVTVKASYRASEQKLRVELLSASSLLPLDSNGSSDPFVQLTLEPRHEFPELAARETQKHKKDLHPLFDETFEFLVPAEPCRKAGACLLLTVLDYDTLGADDLEGEAFLPLREVPGLSGSEEPGEVPQTRLPLTYPAPNGDPILQLLEGRKGDREAQVFVRLRRHRAKQASQHALRPAP.

Residues 92–239 (EPEEHQQTLQ…FKEARKDKGQ (148 aa)) form the C2 1 domain. D127 and D133 together coordinate Ca(2+). S150 is modified (phosphoserine). D206 and D208 together coordinate Ca(2+). Positions 240–543 (DDFLGNVVLR…AKRVQDHTTV (304 aa)) are interaction with RAB27A. One can recognise an MHD1 domain in the interval 557–677 (FQLYISLKEL…RLALVYCSLI (121 aa)). An MHD2 domain is found at 788 to 895 (EDAILPLMKF…ASSRELIRKY (108 aa)). Residues 910–1035 (ELGAVTVKAS…PGLSGSEEPG (126 aa)) form the C2 2 domain. Ca(2+) is bound by residues L940, D941, D947, D1005, D1007, and D1013. A disordered region spans residues 1026–1048 (PGLSGSEEPGEVPQTRLPLTYPA).

This sequence belongs to the unc-13 family. As to quaternary structure, interacts with DOC2A. Interacts with RAB27A. Interacts with RHOG; the interaction increases RhoG affinity to the membrane lipids, targets UNC13D to membrane lipids and facilitates cytotoxic granule (CG) docking to the plasma membrane. Ca(2+) serves as cofactor. In terms of tissue distribution, expressed at high levels in spleen, thymus and leukocytes. Also expressed in lung and placenta, and at very low levels in brain, heart, skeletal muscle and kidney. Expressed in cytotoxic T-lymphocytes (CTL) and mast cells.

Its subcellular location is the cytoplasm. It localises to the membrane. It is found in the late endosome. The protein localises to the recycling endosome. The protein resides in the lysosome. Functionally, plays a role in cytotoxic granule exocytosis in lymphocytes. Required for both granule maturation and granule docking and priming at the immunologic synapse. Regulates assembly of recycling and late endosomal structures, leading to the formation of an endosomal exocytic compartment that fuses with perforin-containing granules at the immunologic synapse and licences them for exocytosis. Regulates Ca(2+)-dependent secretory lysosome exocytosis in mast cells. This chain is Protein unc-13 homolog D (UNC13D), found in Homo sapiens (Human).